Reading from the N-terminus, the 95-residue chain is Protein TusB (95 aa).

It belongs to the DsrH/TusB family. Heterohexamer, formed by a dimer of trimers. The hexameric TusBCD complex contains 2 copies each of TusB, TusC and TusD. The TusBCD complex interacts with TusE.

Its subcellular location is the cytoplasm. Functionally, part of a sulfur-relay system required for 2-thiolation of 5-methylaminomethyl-2-thiouridine (mnm(5)s(2)U) at tRNA wobble positions. This chain is Protein TusB, found in Yersinia pseudotuberculosis serotype O:1b (strain IP 31758).